The sequence spans 621 residues: ATP-dependent lipid A-core flippase (621 aa).

5 consecutive transmembrane segments (helical) span residues 32–52 (IVAA…LAAF), 91–111 (VWGT…LVVI), 192–212 (IVLL…FPLL), 286–306 (SPFS…IALW), and 312–332 (YTTI…YAPI). One can recognise an ABC transmembrane type-1 domain in the interval 33-344 (VAALIAIFGV…LANISIPMQT (312 aa)). An ABC transporter domain is found at 378–611 (FRNVDVEYRS…NGYYTMLRNI (234 aa)). 410–417 (GRSGSGKS) contributes to the ATP binding site.

Belongs to the ABC transporter superfamily. Lipid exporter (TC 3.A.1.106) family. Homodimer.

The protein resides in the cell inner membrane. The catalysed reaction is ATP + H2O + lipid A-core oligosaccharideSide 1 = ADP + phosphate + lipid A-core oligosaccharideSide 2.. In terms of biological role, involved in lipopolysaccharide (LPS) biosynthesis. Translocates lipid A-core from the inner to the outer leaflet of the inner membrane. Transmembrane domains (TMD) form a pore in the inner membrane and the ATP-binding domain (NBD) is responsible for energy generation. This chain is ATP-dependent lipid A-core flippase, found in Neisseria meningitidis serogroup B (strain ATCC BAA-335 / MC58).